The sequence spans 479 residues: Heparin cofactor 2 (479 aa).

Positions 1–23 (MKHPAYTLLLSLIMSMCAGSKGL) are cleaved as a signal peptide. The N-linked (GlcNAc...) asparagine glycan is linked to N31. Tandem repeats lie at residues 55–65 (GEEDDDYLDLE) and 69–79 (SEDDDYIYVVD). The tract at residues 55-79 (GEEDDDYLDLEKLLSEDDDYIYVVD) is 2 X 11 AA approximate repeats, Asp/Glu-rich (acidic) (hirudin-like). Residues Y61 and Y74 each carry the sulfotyrosine modification. N-linked (GlcNAc...) asparagine glycosylation occurs at N168. The tract at residues 172–192 (KYEVTTIHNLFRKLTHRLFRR) is glycosaminoglycan-binding site. 2 N-linked (GlcNAc...) asparagine glycosylation sites follow: N367 and N403.

The protein belongs to the serpin family. In terms of processing, different composition of the N-linked oligosaccharides appears to yield a 68-kDa and a 72-kDa form.

In terms of biological role, thrombin inhibitor activated by the glycosaminoglycans, heparin or dermatan sulfate. In the presence of the latter, HC-II becomes the predominant thrombin inhibitor in place of antithrombin III (AT). The sequence is that of Heparin cofactor 2 (Serpind1) from Rattus norvegicus (Rat).